The primary structure comprises 65 residues: KEGYPMGRDGCKISCVINNNFCKVECQAKWRQSDGYCYFWGLSCYCTNLPDDAQVWDSSTNKCGG.

Positions 1 to 64 (KEGYPMGRDG…VWDSSTNKCG (64 aa)) constitute an LCN-type CS-alpha/beta domain. Intrachain disulfides connect C11/C63, C15/C37, C22/C44, and C26/C46.

The protein belongs to the long (4 C-C) scorpion toxin superfamily. Sodium channel inhibitor family. Beta subfamily. As to expression, expressed by the venom gland.

It localises to the secreted. Functionally, beta toxins bind voltage-independently at site-4 of sodium channels (Nav) and shift the voltage of activation toward more negative potentials thereby affecting sodium channel activation and promoting spontaneous and repetitive firing. The sequence is that of Putative beta-neurotoxin RjAa4 from Rhopalurus junceus (Caribbean blue scorpion).